The chain runs to 2298 residues: Protein Ycf2 (2298 aa).

1637-1644 provides a ligand contact to ATP; sequence GSIGTGRS.

Belongs to the Ycf2 family.

Its subcellular location is the plastid. It is found in the chloroplast stroma. Its function is as follows. Probable ATPase of unknown function. Its presence in a non-photosynthetic plant (Epifagus virginiana) and experiments in tobacco indicate that it has an essential function which is probably not related to photosynthesis. In Lotus japonicus (Lotus corniculatus var. japonicus), this protein is Protein Ycf2.